Reading from the N-terminus, the 229-residue chain is Peroxiredoxin 1 (229 aa).

Positions 33-192 (LGPKNKAPDF…AFRTLKAFQF (160 aa)) constitute a Thioredoxin domain. The active-site Cysteine sulfenic acid (-SOH) intermediate is C78.

Belongs to the peroxiredoxin family. AhpC/Prx1 subfamily. As to quaternary structure, homodimer; disulfide-linked, upon oxidation.

It carries out the reaction a hydroperoxide + [thioredoxin]-dithiol = an alcohol + [thioredoxin]-disulfide + H2O. Its function is as follows. Thiol-specific peroxidase that catalyzes the reduction of hydrogen peroxide and organic hydroperoxides to water and alcohols, respectively. Plays a role in cell protection against oxidative stress by detoxifying peroxides and as sensor of hydrogen peroxide-mediated signaling events. The sequence is that of Peroxiredoxin 1 (TSA1) from Brugia malayi (Filarial nematode worm).